The following is a 179-amino-acid chain: Large ribosomal subunit protein uL5 (179 aa).

This sequence belongs to the universal ribosomal protein uL5 family. In terms of assembly, part of the 50S ribosomal subunit; part of the 5S rRNA/L5/L18/L25 subcomplex. Contacts the 5S rRNA and the P site tRNA. Forms a bridge to the 30S subunit in the 70S ribosome.

Functionally, this is one of the proteins that bind and probably mediate the attachment of the 5S RNA into the large ribosomal subunit, where it forms part of the central protuberance. In the 70S ribosome it contacts protein S13 of the 30S subunit (bridge B1b), connecting the 2 subunits; this bridge is implicated in subunit movement. Contacts the P site tRNA; the 5S rRNA and some of its associated proteins might help stabilize positioning of ribosome-bound tRNAs. The sequence is that of Large ribosomal subunit protein uL5 from Bordetella bronchiseptica (strain ATCC BAA-588 / NCTC 13252 / RB50) (Alcaligenes bronchisepticus).